We begin with the raw amino-acid sequence, 297 residues long: Cyclin-dependent kinase 1 (297 aa).

A Protein kinase domain is found at 4 to 287 (FEKIEKIGEG…AKDILEHPYF (284 aa)). ATP is bound by residues 10 to 18 (IGEGTYGVV) and Lys-33. The residue at position 14 (Thr-14) is a Phosphothreonine. The residue at position 15 (Tyr-15) is a Phosphotyrosine. Asp-128 acts as the Proton acceptor in catalysis. The residue at position 160 (Tyr-160) is a Phosphotyrosine. Thr-161 is subject to Phosphothreonine; by CAK.

It belongs to the protein kinase superfamily. CMGC Ser/Thr protein kinase family. CDC2/CDKX subfamily. Forms a stable but non-covalent complex with a regulatory subunit and with a cyclin. Component of the Frs-CycA-Cdk1 complex composed of Cdk1, CycA and Z600.

Its subcellular location is the nucleus. The enzyme catalyses L-seryl-[protein] + ATP = O-phospho-L-seryl-[protein] + ADP + H(+). It catalyses the reaction L-threonyl-[protein] + ATP = O-phospho-L-threonyl-[protein] + ADP + H(+). It carries out the reaction [DNA-directed RNA polymerase] + ATP = phospho-[DNA-directed RNA polymerase] + ADP + H(+). Its activity is regulated as follows. Phosphorylation at Thr-14 or Tyr-15 inactivates the enzyme, while phosphorylation at Thr-161 activates it. Plays a key role in the control of the eukaryotic cell cycle. Required for entry into S-phase and mitosis. In embryos, promotes the release of Rif1 from chromatin during mid-blastula transition. p34 is a component of the kinase complex that phosphorylates the repetitive C-terminus of RNA polymerase II. This is Cyclin-dependent kinase 1 from Drosophila melanogaster (Fruit fly).